The following is a 462-amino-acid chain: MTTDIRALYTRLPAIDRLLRDPAFSPLLAQHGHSQVVAQLRQMLDEAREQISQRQTLPDWSHDWLHACEQRLTAGQRSALRPVFNLTGTVLHTNLGRAIQAESAVEAVASAMRAPVTLEYDLDDAGRGHRDRAIADLLCQITGAEDACIVNNNAAAVLLMLAATASGREVVVSRGELVEIGGAFRIPDVMRQAGCQLHEVGTTNRTHAKDYRQAVNDNTALLMKVHTSNYSIEGFTKAVDEAELAAIGRELDIPVVADLGSGSLVDLSQYGLPKEPMPQEMIAAGVSLVSFSGDKLLGGPQAGIIVGKRALIARLQSHPLKRALRADKMTLAALEATLRLYQHPEVLTERLPTLRLLTRPAEEIRRLAERLLPDLAAHYADFAVSVAACQSQIGSGSLPVDRLPSAALTFTPHDGRGSRLEALAARWRALPCPVIGRIDDGRLWLDLRCLEDETRFMEMLLR.

Lys295 carries the post-translational modification N6-(pyridoxal phosphate)lysine.

The protein belongs to the SelA family. As to quaternary structure, homodecamer; pentamer of dimers. Binds only one seryl-tRNA(Sec) per dimer. The cofactor is pyridoxal 5'-phosphate.

It is found in the cytoplasm. The enzyme catalyses L-seryl-tRNA(Sec) + selenophosphate + H(+) = L-selenocysteinyl-tRNA(Sec) + phosphate. It participates in aminoacyl-tRNA biosynthesis; selenocysteinyl-tRNA(Sec) biosynthesis; selenocysteinyl-tRNA(Sec) from L-seryl-tRNA(Sec) (bacterial route): step 1/1. In terms of biological role, converts seryl-tRNA(Sec) to selenocysteinyl-tRNA(Sec) required for selenoprotein biosynthesis. This Klebsiella pneumoniae (strain 342) protein is L-seryl-tRNA(Sec) selenium transferase.